Here is a 359-residue protein sequence, read N- to C-terminus: Nicotinate-nucleotide--dimethylbenzimidazole phosphoribosyltransferase (359 aa).

Glutamate 318 (proton acceptor) is an active-site residue.

Belongs to the CobT family. In terms of assembly, homodimer.

The catalysed reaction is 5,6-dimethylbenzimidazole + nicotinate beta-D-ribonucleotide = alpha-ribazole 5'-phosphate + nicotinate + H(+). The protein operates within nucleoside biosynthesis; alpha-ribazole biosynthesis; alpha-ribazole from 5,6-dimethylbenzimidazole: step 1/2. Catalyzes the synthesis of alpha-ribazole-5'-phosphate from nicotinate mononucleotide (NAMN) and 5,6-dimethylbenzimidazole (DMB). This is Nicotinate-nucleotide--dimethylbenzimidazole phosphoribosyltransferase from Escherichia coli (strain ATCC 8739 / DSM 1576 / NBRC 3972 / NCIMB 8545 / WDCM 00012 / Crooks).